The primary structure comprises 445 residues: tRNA modification GTPase MnmE (445 aa).

(6S)-5-formyl-5,6,7,8-tetrahydrofolate-binding residues include R20, E79, and K119. Residues 215-371 form the TrmE-type G domain; that stretch reads GLKLAIVGPP…ILKNIENIAE (157 aa). N225 is a binding site for K(+). GTP contacts are provided by residues 225 to 230, 244 to 250, and 269 to 272; these read NTGKSS, SNIAGTT, and DTAG. S229 contacts Mg(2+). K(+)-binding residues include S244, I246, and T249. T250 is a binding site for Mg(2+). K445 contacts (6S)-5-formyl-5,6,7,8-tetrahydrofolate.

The protein belongs to the TRAFAC class TrmE-Era-EngA-EngB-Septin-like GTPase superfamily. TrmE GTPase family. As to quaternary structure, homodimer. Heterotetramer of two MnmE and two MnmG subunits. Requires K(+) as cofactor.

It is found in the cytoplasm. Functionally, exhibits a very high intrinsic GTPase hydrolysis rate. Involved in the addition of a carboxymethylaminomethyl (cmnm) group at the wobble position (U34) of certain tRNAs, forming tRNA-cmnm(5)s(2)U34. The protein is tRNA modification GTPase MnmE of Rickettsia akari (strain Hartford).